The primary structure comprises 450 residues: tRNA modification GTPase MnmE (450 aa).

(6S)-5-formyl-5,6,7,8-tetrahydrofolate-binding residues include Arg23, Glu79, and Lys118. The 161-residue stretch at 214 to 374 folds into the TrmE-type G domain; sequence GITLILVGKP…LKEHILNKVG (161 aa). Asn224 provides a ligand contact to K(+). GTP-binding positions include 224–229, 243–249, and 268–271; these read NAGKSS, TSIAGTT, and DTAG. Ser228 lines the Mg(2+) pocket. Positions 243, 245, and 248 each coordinate K(+). Residue Thr249 coordinates Mg(2+). A (6S)-5-formyl-5,6,7,8-tetrahydrofolate-binding site is contributed by Lys450.

This sequence belongs to the TRAFAC class TrmE-Era-EngA-EngB-Septin-like GTPase superfamily. TrmE GTPase family. Homodimer. Heterotetramer of two MnmE and two MnmG subunits. It depends on K(+) as a cofactor.

It is found in the cytoplasm. Exhibits a very high intrinsic GTPase hydrolysis rate. Involved in the addition of a carboxymethylaminomethyl (cmnm) group at the wobble position (U34) of certain tRNAs, forming tRNA-cmnm(5)s(2)U34. The sequence is that of tRNA modification GTPase MnmE from Francisella tularensis subsp. holarctica (strain OSU18).